The sequence spans 377 residues: Stimulator of interferon genes protein 7 (377 aa).

4 helical membrane-spanning segments follow: residues 30–50 (TAAITSAIIGVSSGAMLFLAV), 57–77 (THFLVFTAALLTLSFAFGELL), 106–126 (FTFDHGGCISLTAMFSALILC), and 141–161 (FAILFSVNCLVVPQLLFLVGL).

Belongs to the STING family.

The protein resides in the membrane. Functionally, facilitator of innate immune signaling that acts as a sensor of second messenger signals produced by cyclic GMP-AMP synthase-like receptors (cGLRs) and promotes the production of type I interferon. Innate immune response is triggered in response to nucleotides from viruses and bacteria delivered to the cytoplasm. Acts by binding cyclic dinucleotides: recognizes and binds a large variety of 2'-3'- and 3'-3' linked cyclic dinucleotides (2'-3'-cGAMP, 3'-3'-cGAMP, 2',3'-cUAMP, 3',3'-cUAMP and/or 3',3'-c-di-GMP) second messengers produced by cGLRs in response to nucleotides in the cytosol, such as double-stranded RNA (dsRNA). Upon binding to cyclic dinucleotides, oligomerizes and promotes the recruitment and subsequent activation of the transcription factor IRF3 to induce expression of type I interferon. The protein is Stimulator of interferon genes protein 7 of Stylophora pistillata (Smooth cauliflower coral).